The primary structure comprises 512 residues: Maturase K (512 aa).

The protein belongs to the intron maturase 2 family. MatK subfamily.

It is found in the plastid. It localises to the chloroplast. Its function is as follows. Usually encoded in the trnK tRNA gene intron. Probably assists in splicing its own and other chloroplast group II introns. The protein is Maturase K of Acer campestre (Field maple).